We begin with the raw amino-acid sequence, 89 residues long: Small ribosomal subunit protein uS15 (89 aa).

This sequence belongs to the universal ribosomal protein uS15 family. As to quaternary structure, part of the 30S ribosomal subunit. Forms a bridge to the 50S subunit in the 70S ribosome, contacting the 23S rRNA.

In terms of biological role, one of the primary rRNA binding proteins, it binds directly to 16S rRNA where it helps nucleate assembly of the platform of the 30S subunit by binding and bridging several RNA helices of the 16S rRNA. Its function is as follows. Forms an intersubunit bridge (bridge B4) with the 23S rRNA of the 50S subunit in the ribosome. In Methylobacterium sp. (strain 4-46), this protein is Small ribosomal subunit protein uS15.